A 634-amino-acid chain; its full sequence is tRNA uridine 5-carboxymethylaminomethyl modification enzyme MnmG (634 aa).

Residue 14–19 participates in FAD binding; it reads GGGHAG. Residue 279 to 293 coordinates NAD(+); the sequence is GPRYCPSIEDKVVRF.

Belongs to the MnmG family. Homodimer. Heterotetramer of two MnmE and two MnmG subunits. FAD is required as a cofactor.

It is found in the cytoplasm. Its function is as follows. NAD-binding protein involved in the addition of a carboxymethylaminomethyl (cmnm) group at the wobble position (U34) of certain tRNAs, forming tRNA-cmnm(5)s(2)U34. The sequence is that of tRNA uridine 5-carboxymethylaminomethyl modification enzyme MnmG from Xanthomonas euvesicatoria pv. vesicatoria (strain 85-10) (Xanthomonas campestris pv. vesicatoria).